Here is a 248-residue protein sequence, read N- to C-terminus: 3-deoxy-manno-octulosonate cytidylyltransferase (248 aa).

This sequence belongs to the KdsB family.

The protein localises to the cytoplasm. It catalyses the reaction 3-deoxy-alpha-D-manno-oct-2-ulosonate + CTP = CMP-3-deoxy-beta-D-manno-octulosonate + diphosphate. The protein operates within nucleotide-sugar biosynthesis; CMP-3-deoxy-D-manno-octulosonate biosynthesis; CMP-3-deoxy-D-manno-octulosonate from 3-deoxy-D-manno-octulosonate and CTP: step 1/1. Its pathway is bacterial outer membrane biogenesis; lipopolysaccharide biosynthesis. Its function is as follows. Activates KDO (a required 8-carbon sugar) for incorporation into bacterial lipopolysaccharide in Gram-negative bacteria. In Enterobacter sp. (strain 638), this protein is 3-deoxy-manno-octulosonate cytidylyltransferase.